Here is a 320-residue protein sequence, read N- to C-terminus: ATP phosphoribosyltransferase (320 aa).

The protein belongs to the ATP phosphoribosyltransferase family. Long subfamily. The cofactor is Mg(2+).

It is found in the cytoplasm. It catalyses the reaction 1-(5-phospho-beta-D-ribosyl)-ATP + diphosphate = 5-phospho-alpha-D-ribose 1-diphosphate + ATP. Its pathway is amino-acid biosynthesis; L-histidine biosynthesis; L-histidine from 5-phospho-alpha-D-ribose 1-diphosphate: step 1/9. Its activity is regulated as follows. Feedback inhibited by histidine. Catalyzes the condensation of ATP and 5-phosphoribose 1-diphosphate to form N'-(5'-phosphoribosyl)-ATP (PR-ATP). Has a crucial role in the pathway because the rate of histidine biosynthesis seems to be controlled primarily by regulation of HisG enzymatic activity. The polypeptide is ATP phosphoribosyltransferase (hisG) (Caulobacter vibrioides (strain ATCC 19089 / CIP 103742 / CB 15) (Caulobacter crescentus)).